The chain runs to 1423 residues: Histone-lysine N-methyltransferase ATXR7 (1423 aa).

The GYF domain occupies 263–312 (HACWFLVDGEGRNHGPHSILELFSWQQHGYVSDAALIRDGENKLRPITLA). Disordered regions lie at residues 923 to 960 (CKDHEESLSNKPSQKVKKAHTSKLKRKNLSDARDEGTK), 1057 to 1097 (CSIS…SSTD), and 1115 to 1158 (LPCH…GRPK). Basic residues predominate over residues 936 to 949 (QKVKKAHTSKLKRK). The segment covering 950-959 (NLSDARDEGT) has biased composition (basic and acidic residues). The segment covering 1057 to 1071 (CSISQKGRKSSQSSI) has biased composition (polar residues). Basic and acidic residues-rich tracts occupy residues 1115–1124 (LPCHTSDKLQ) and 1140–1157 (HTTERSPIKDLSVDDGRP). The 118-residue stretch at 1266–1383 (KHLRFQQSKI…AGEEISYNYK (118 aa)) folds into the SET domain. Tyr-1382 is an S-adenosyl-L-methionine binding site.

This sequence belongs to the class V-like SAM-binding methyltransferase superfamily. Histone-lysine methyltransferase family. TRX/MLL subfamily. Expressed in the shoot and root apices, vascular tissues and mesophyll cells of rosette leaves.

Its subcellular location is the nucleus. The enzyme catalyses L-lysyl(4)-[histone H3] + 3 S-adenosyl-L-methionine = N(6),N(6),N(6)-trimethyl-L-lysyl(4)-[histone H3] + 3 S-adenosyl-L-homocysteine + 3 H(+). It catalyses the reaction L-lysyl(36)-[histone H3] + 2 S-adenosyl-L-methionine = N(6),N(6)-dimethyl-L-lysyl(36)-[histone H3] + 2 S-adenosyl-L-homocysteine + 2 H(+). Its function is as follows. Histone methyltransferase involved in regulation of flowering time. Required for the expression of the flowering repressors FLC and MADS-box genes of the MAF family. Required for histone H3 dimethylation on 'Lys-36' H3K36me2 at the FLC locus. Required for histone H3 trimethylation on 'Lys-4' (H3K4me3) at the FLC locus. Prevents trimethylation on 'Lys-27' (H3K27me3) at the same locus. Involved in the control of seed dormancy and germination. This Arabidopsis thaliana (Mouse-ear cress) protein is Histone-lysine N-methyltransferase ATXR7.